Consider the following 495-residue polypeptide: Protein FAM83F (495 aa).

The residue at position 2 (A2) is an N-acetylalanine. Positions 2 to 294 (AESQLSCLDE…LYAISEEVNL (293 aa)) are DUF1669. S4 bears the Phosphoserine mark. 2 disordered regions span residues 341-362 (QQREAGGNVEGQEEGSGGGESA) and 384-495 (PISP…CVIS). Residues 447 to 458 (PAVPSSMASSPS) show a composition bias toward low complexity. S477 carries the phosphoserine modification.

The protein belongs to the FAM83 family. As to quaternary structure, directly interacts (via DUF1669) with CSNK1A1 and CSNK1A1L.

Its subcellular location is the cell membrane. This Mus musculus (Mouse) protein is Protein FAM83F (Fam83f).